Consider the following 34-residue polypeptide: Peptidoglycan hydrolase P7 (34 aa).

The chain crosses the membrane as a helical span at residues 10–26 (VLITLGVLAAVNKVSAL).

The protein localises to the virion membrane. Exolysin that catalyzes the cleavage of the host peptidoglycans during virus entry. The protein is Peptidoglycan hydrolase P7 (VII) of Pseudoalteromonas espejiana (Bacteriophage PM2).